The following is a 28-amino-acid chain: Somatostatin-2 (28 aa).

Cysteine 17 and cysteine 28 are disulfide-bonded.

This sequence belongs to the somatostatin family.

Its subcellular location is the secreted. Somatostatin inhibits the release of somatotropin. This chain is Somatostatin-2 (sst2), found in Oreochromis niloticus (Nile tilapia).